The following is a 340-amino-acid chain: UDP-N-acetylglucosamine--N-acetylmuramyl-(pentapeptide) pyrophosphoryl-undecaprenol N-acetylglucosamine transferase (340 aa).

Residues 10–12 (TGG), Asn-124, Ser-179, and Gln-277 contribute to the UDP-N-acetyl-alpha-D-glucosamine site.

The protein belongs to the glycosyltransferase 28 family. MurG subfamily.

Its subcellular location is the cell inner membrane. It carries out the reaction di-trans,octa-cis-undecaprenyl diphospho-N-acetyl-alpha-D-muramoyl-L-alanyl-D-glutamyl-meso-2,6-diaminopimeloyl-D-alanyl-D-alanine + UDP-N-acetyl-alpha-D-glucosamine = di-trans,octa-cis-undecaprenyl diphospho-[N-acetyl-alpha-D-glucosaminyl-(1-&gt;4)]-N-acetyl-alpha-D-muramoyl-L-alanyl-D-glutamyl-meso-2,6-diaminopimeloyl-D-alanyl-D-alanine + UDP + H(+). It functions in the pathway cell wall biogenesis; peptidoglycan biosynthesis. Functionally, cell wall formation. Catalyzes the transfer of a GlcNAc subunit on undecaprenyl-pyrophosphoryl-MurNAc-pentapeptide (lipid intermediate I) to form undecaprenyl-pyrophosphoryl-MurNAc-(pentapeptide)GlcNAc (lipid intermediate II). The polypeptide is UDP-N-acetylglucosamine--N-acetylmuramyl-(pentapeptide) pyrophosphoryl-undecaprenol N-acetylglucosamine transferase (Sulfurimonas denitrificans (strain ATCC 33889 / DSM 1251) (Thiomicrospira denitrificans (strain ATCC 33889 / DSM 1251))).